A 438-amino-acid chain; its full sequence is Enolase (438 aa).

Gln-174 is a (2R)-2-phosphoglycerate binding site. Glu-216 acts as the Proton donor in catalysis. Mg(2+)-binding residues include Asp-253, Glu-297, and Asp-324. Positions 349, 378, 379, and 400 each coordinate (2R)-2-phosphoglycerate. Lys-349 (proton acceptor) is an active-site residue.

It belongs to the enolase family. Component of the RNA degradosome, a multiprotein complex involved in RNA processing and mRNA degradation. Mg(2+) is required as a cofactor.

It localises to the cytoplasm. The protein resides in the secreted. The protein localises to the cell surface. The catalysed reaction is (2R)-2-phosphoglycerate = phosphoenolpyruvate + H2O. Its pathway is carbohydrate degradation; glycolysis; pyruvate from D-glyceraldehyde 3-phosphate: step 4/5. In terms of biological role, catalyzes the reversible conversion of 2-phosphoglycerate (2-PG) into phosphoenolpyruvate (PEP). It is essential for the degradation of carbohydrates via glycolysis. The sequence is that of Enolase from Psychrobacter sp. (strain PRwf-1).